A 337-amino-acid chain; its full sequence is Anthranilate phosphoribosyltransferase (337 aa).

5-phospho-alpha-D-ribose 1-diphosphate-binding positions include Gly-81, 84–85, Ser-89, 91–94, 109–117, and Ala-121; these read GD, NVST, and KHGNRALSS. Gly-81 is a binding site for anthranilate. Ser-93 provides a ligand contact to Mg(2+). Asn-112 serves as a coordination point for anthranilate. An anthranilate-binding site is contributed by Arg-167. Residues Asp-226 and Glu-227 each coordinate Mg(2+).

This sequence belongs to the anthranilate phosphoribosyltransferase family. In terms of assembly, homodimer. The cofactor is Mg(2+).

The enzyme catalyses N-(5-phospho-beta-D-ribosyl)anthranilate + diphosphate = 5-phospho-alpha-D-ribose 1-diphosphate + anthranilate. It functions in the pathway amino-acid biosynthesis; L-tryptophan biosynthesis; L-tryptophan from chorismate: step 2/5. In terms of biological role, catalyzes the transfer of the phosphoribosyl group of 5-phosphorylribose-1-pyrophosphate (PRPP) to anthranilate to yield N-(5'-phosphoribosyl)-anthranilate (PRA). The protein is Anthranilate phosphoribosyltransferase of Bradyrhizobium sp. (strain ORS 278).